The sequence spans 234 residues: Cell adhesion molecule CEACAM15 (234 aa).

Residues 1 to 32 (MGAETMESPSLFLCKGLLLTASLLICWNWSTA) form the signal peptide. N-linked (GlcNAc...) asparagine glycosylation is found at Asn-28, Asn-75, Asn-151, and Asn-184. Residues 146-226 (PYLQLNHTRL…NSFSSKKSYP (81 aa)) enclose the Ig-like C2-type domain. Residues Cys-165 and Cys-213 are joined by a disulfide bond.

Belongs to the immunoglobulin superfamily. CEA family. In terms of tissue distribution, detected in placenta.

This Mus musculus (Mouse) protein is Cell adhesion molecule CEACAM15.